Reading from the N-terminus, the 266-residue chain is Biotin--[acetyl-CoA-carboxylase] ligase (266 aa).

One can recognise a BPL/LPL catalytic domain in the interval 14–202 (RSLRDQLIGA…ELEARIIQWR (189 aa)). Residues 38–39 (ST), Gln63, Arg67, and Lys138 each bind biotin.

Belongs to the biotin--protein ligase family. As to quaternary structure, monomer in solution. Forms dimers under specific crystallization conditions.

The catalysed reaction is biotin + L-lysyl-[protein] + ATP = N(6)-biotinyl-L-lysyl-[protein] + AMP + diphosphate + H(+). It carries out the reaction biotin + ATP + H(+) = biotinyl-5'-AMP + diphosphate. It catalyses the reaction biotinyl-5'-AMP + L-lysyl-[protein] = N(6)-biotinyl-L-lysyl-[protein] + AMP + 2 H(+). With respect to regulation, binding of biotin and ATP significantly increases the thermal stability of BirA and leads to the formation of a high affinity holoenzyme complex. Catalyzes the transfer of biotin onto a conserved lysine residue of the biotin carboxyl carrier protein (BCCP) domain of acetyl-CoA carboxylase and converts it to active holo-BCCP. Forms an acyl-adenylate intermediate. Cannot use GTP or desthiobiotin. The protein is Biotin--[acetyl-CoA-carboxylase] ligase of Mycobacterium tuberculosis (strain ATCC 25618 / H37Rv).